A 506-amino-acid polypeptide reads, in one-letter code: AMP phosphorylase (506 aa).

Residues Gly-168, 194-199 (SRAITG), and Thr-203 each bind AMP. The active-site Proton donor is Asp-256. Residues Ser-264 and Lys-288 each coordinate AMP.

Belongs to the thymidine/pyrimidine-nucleoside phosphorylase family. Type 2 subfamily.

It carries out the reaction AMP + phosphate = alpha-D-ribose 1,5-bisphosphate + adenine. The enzyme catalyses CMP + phosphate = cytosine + alpha-D-ribose 1,5-bisphosphate. The catalysed reaction is UMP + phosphate = alpha-D-ribose 1,5-bisphosphate + uracil. Functionally, catalyzes the conversion of AMP and phosphate to adenine and ribose 1,5-bisphosphate (R15P). Exhibits phosphorylase activity toward CMP and UMP in addition to AMP. Functions in an archaeal AMP degradation pathway, together with R15P isomerase and RubisCO. The polypeptide is AMP phosphorylase (Methanococcoides burtonii (strain DSM 6242 / NBRC 107633 / OCM 468 / ACE-M)).